We begin with the raw amino-acid sequence, 299 residues long: MRRAETIAEIRAAVRELRYRENPRLKGETWGTRSIGFVPTMGALHEGHLSLVRAAKAECDAVVASIFVNPTQFGPNEDFGKYPRTVEADCALLEREGVDAVFLPQVEEMYPAGATTWVEVEELSGRLDGASRPGHFRGVATVVAKLFHIVGPDRAYFGQKDAAQVANLRRMVRDLDFDLEVVVCPIVREADGLAMSSRNRYLSVEERRQGLVLSRALRAMEAGHAAGERDGRRLLAAGASVMAEEPAVRVDYLRVVDPETLVDVEAVSGPALATVAAYVGATRLIDNVLLGETPAAFKL.

41-48 (MGALHEGH) is a binding site for ATP. Catalysis depends on H48, which acts as the Proton donor. Q72 lines the (R)-pantoate pocket. Q72 lines the beta-alanine pocket. 158–161 (GQKD) is a binding site for ATP. Q164 provides a ligand contact to (R)-pantoate. ATP is bound by residues V187 and 195–198 (MSSR).

Belongs to the pantothenate synthetase family. Homodimer.

It is found in the cytoplasm. The catalysed reaction is (R)-pantoate + beta-alanine + ATP = (R)-pantothenate + AMP + diphosphate + H(+). It participates in cofactor biosynthesis; (R)-pantothenate biosynthesis; (R)-pantothenate from (R)-pantoate and beta-alanine: step 1/1. Catalyzes the condensation of pantoate with beta-alanine in an ATP-dependent reaction via a pantoyl-adenylate intermediate. The sequence is that of Pantothenate synthetase from Acidobacterium capsulatum (strain ATCC 51196 / DSM 11244 / BCRC 80197 / JCM 7670 / NBRC 15755 / NCIMB 13165 / 161).